The sequence spans 127 residues: Protein chibby homolog 1 (127 aa).

Positions 1 to 25 are disordered; sequence MPLFGSIFSPKKTPPRKSASLSNLH. Phosphoserine is present on residues Ser-9 and Ser-20. A minimal region for the interaction with PKD2 region spans residues 60 to 112; sequence VADSVISGGVDRRETQRLRKRNQQLEEENNLLRLKVDILLDMLSETTAESHLK. Residues 68-110 are a coiled coil; sequence GVDRRETQRLRKRNQQLEEENNLLRLKVDILLDMLSETTAESH. The segment at 77–98 is leucine-zipper; mediates homodimerization; it reads LRKRNQQLEEENNLLRLKVDIL.

Belongs to the chibby family. As to quaternary structure, homodimer. Homodimerization is essential for nuclear localization and interaction with KPNA4 but is dispensable for interaction with CTNNB1. Interacts with polycystin-2/PKD2 and GM130. Interacts with the C-terminal region of CTNNB1. Interacts (C-terminus) with TCIM (C-terminus), TCIM competes with CTNNB1 for the interaction with CBY1. Interacts with FAM92A; this interaction facilitates targeting of FAM92A to cilium basal body. Interacts with CIBAR2. Interacts with KPNA4. As to expression, found in heart, brain, lung, liver, muscle, kidney and testis. Levels are approximately 3-fold higher in embryonic and adult heart than in lung or liver.

The protein localises to the nucleus speckle. The protein resides in the cytoplasm. It is found in the cytoskeleton. Its subcellular location is the cilium basal body. It localises to the microtubule organizing center. The protein localises to the centrosome. The protein resides in the centriole. It is found in the golgi apparatus. Its subcellular location is the trans-Golgi network. It localises to the cell projection. The protein localises to the cilium. The protein resides in the flagellum. It is found in the nucleus. Inhibits the Wnt/Wingless pathway by binding to CTNNB1/beta-catenin and inhibiting beta-catenin-mediated transcriptional activation through competition with TCF/LEF transcription factors. Has also been shown to play a role in regulating the intracellular trafficking of polycystin-2/PKD2 and possibly of other intracellular proteins. Promotes adipocyte and cardiomyocyte differentiation. In Mus musculus (Mouse), this protein is Protein chibby homolog 1 (Cby1).